The sequence spans 402 residues: BTB and MATH domain-containing protein 40 (402 aa).

Residues 1–25 (MSDRHLYGSDHSYLSSKPSCSSCRR) are disordered. The segment covering 15 to 25 (SSKPSCSSCRR) has biased composition (low complexity). Positions 43–177 (VLTQRWTVCN…DKSLVISCHI (135 aa)) constitute an MATH domain. In terms of domain architecture, BTB spans 222–295 (TDMTIVAGPL…IYAGVIKSDI (74 aa)).

Interacts with cul-3.

It participates in protein modification; protein ubiquitination. Probable substrate-specific adapter of an E3 ubiquitin-protein ligase complex which mediates the ubiquitination and subsequent proteasomal degradation of target proteins. This Caenorhabditis elegans protein is BTB and MATH domain-containing protein 40 (bath-40).